The sequence spans 1178 residues: MLKFQTVRGGLRLLGVRRSSSAPVASPNVRRLEYKPIKKVMVANRGEIAIRVFRACTELGIRTVAVYSEQDTGQMHRQKADEAYLIGRGLAPVQAYLHIPDIIKVAKENGVDAVHPGYGFLSERADFAQACQDAGVRFIGPSPEVVRKMGDKVEARAIAIAAGVPVVPGTDSPISSLHEAHEFSNTFGFPIIFKAAYGGGGRGMRVVHSYEELEENYTRAYSEALAAFGNGALFVEKFIEKPRHIEVQILGDQYGNILHLYERDCSIQRRHQKVVEIAPATHLDPQLRSRLTSDSVKLAKQVGYENAGTVEFLVDKHGKHYFIEVNSRLQVEHTVTEEITDVDLVHAQIHVSEGRSLPDLGLRQENIRINGCAIQCRVTTEDPARSFQPDTGRIEVFRSGEGMGIRLDNASAFQGAVISPHYDSLLVKVIAHGKDHPTAATKMSRALAEFRVRGVKTNIPFLQNVLNNQQFLAGTVDTQFIDENPELFQLRPAQNRAQKLLHYLGHVMVNGPTTPIPVNVSPSPVDPAVPVVPIGPPPAGFRDILLREGPEGFARAVRNHQGLLLMDTTFRDAHQSLLATRVRTHDLKKIAPYVAHNFNKLFSMENWGGATFDVAMRFLYECPWRRLQELRELIPNIPFQMLLRGANAVGYTNYPDNVVFKFCEVAKENGMDVFRVFDSLNYLPNMLLGMEAAGSAGGVVEAAISYTGDVADPSRTKYSLEYYMGLAEELVRAGTHILCIKDMAGLLKPAACTMLVSSLRDRFPDLPLHIHTHDTSGAGVAAMLACAQAGADVVDVAVDSMSGMTSQPSMGALVACTKGTPLDTEVPLERVFDYSEYWEGARGLYAAFDCTATMKSGNSDVYENEIPGGQYTNLHFQAHSMGLGSKFKEVKKAYVEANQMLGDLIKVTPSSKIVGDLAQFMVQNGLSRAEAEAQAEELSFPRSVVEFLQGYIGIPHGGFPEPFRSKVLKDLPRIEGRPGASLPPLNLKELEKDLIDRHGEEVTPEDVLSAAMYPDVFAQFKDFTATFGPLDSLNTRLFLQGPKIAEEFEVELERGKTLHIKALAVSDLNRAGQRQVFFELNGQLRSILVKDTQAMKEMHFHPKALKDVKGQIGAPMPGKVIDIKVAAGDKVAKGQPLCVLSAMKMETVVTSPMEGTIRKVHVTKDMTLEGDDLILEIE.

A mitochondrion-targeting transit peptide spans 1 to 20 (MLKFQTVRGGLRLLGVRRSS). S21 bears the Phosphoserine mark. N6-acetyllysine is present on residues K35 and K39. One can recognise a Biotin carboxylation domain in the interval 36–486 (PIKKVMVANR…DTQFIDENPE (451 aa)). Position 79 is an N6-acetyllysine; alternate (K79). The residue at position 79 (K79) is an N6-succinyllysine; alternate. K148 and K152 each carry N6-acetyllysine. ATP contacts are provided by K152 and E236. In terms of domain architecture, ATP-grasp spans 156–353 (RAIAIAAGVP…LVHAQIHVSE (198 aa)). K241 is modified (N6-acetyllysine). Position 271 (H271) interacts with ATP. An N6-acetyllysine mark is found at K297, K316, and K319. The active site involves R328. N6-acetyllysine is present on K434. Residue K442 is modified to N6-succinyllysine. The region spanning 563 to 832 (LLLMDTTFRD…DTEVPLERVF (270 aa)) is the Pyruvate carboxyltransferase domain. 571-575 (RDAHQ) provides a ligand contact to substrate. Residue D572 coordinates Mn(2+). K589 is subject to N6-acetyllysine. Substrate is bound at residue R644. Residues K661 and K717 each carry the N6-acetyllysine modification. K741 contributes to the Mn(2+) binding site. K741 carries the N6-carboxylysine modification. At K748 the chain carries N6-acetyllysine. Positions 771 and 773 each coordinate Mn(2+). N6-acetyllysine is present on K892. T908 contributes to the substrate binding site. K969 is subject to N6-acetyllysine. N6-acetyllysine; alternate is present on K988. Residue K988 is modified to N6-succinyllysine; alternate. K992 carries the N6-acetyllysine modification. T1003 carries the phosphothreonine modification. N6-acetyllysine is present on residues K1061, K1090, and K1124. In terms of domain architecture, Biotinyl-binding spans 1109–1178 (KGQIGAPMPG…EGDDLILEIE (70 aa)). K1144 bears the N6-biotinyllysine mark.

Homotetramer. Interacts (via the biotin carboxylation domain) with SIRT4. It depends on biotin as a cofactor. Requires Mn(2+) as cofactor. Post-translationally, acetylation of Lys-316 is observed in liver mitochondria from fasted mice but not from fed mice. Acetylation of Lys-748 might play a role in catalytic activity regulation. In terms of tissue distribution, liver, kidney, adipose tissue, liver and brain.

It is found in the mitochondrion matrix. The enzyme catalyses hydrogencarbonate + pyruvate + ATP = oxaloacetate + ADP + phosphate + H(+). The protein operates within carbohydrate biosynthesis; gluconeogenesis. In terms of biological role, pyruvate carboxylase catalyzes a 2-step reaction, involving the ATP-dependent carboxylation of the covalently attached biotin in the first step and the transfer of the carboxyl group to pyruvate in the second. Catalyzes in a tissue specific manner, the initial reactions of glucose (liver, kidney) and lipid (adipose tissue, liver, brain) synthesis from pyruvate. This Mus musculus (Mouse) protein is Pyruvate carboxylase, mitochondrial (Pc).